A 188-amino-acid polypeptide reads, in one-letter code: Large ribosomal subunit protein eL18 (188 aa).

The segment at 153–188 is disordered; the sequence is GKAPGTPHSHTKPYVRSKGRKFERARGRRASCGYKN. Over residues 161-171 the composition is skewed to basic residues; sequence SHTKPYVRSKG.

This sequence belongs to the eukaryotic ribosomal protein eL18 family. Component of the large ribosomal subunit.

Its subcellular location is the cytoplasm. The protein localises to the cytosol. The protein resides in the rough endoplasmic reticulum. Component of the large ribosomal subunit. The ribosome is a large ribonucleoprotein complex responsible for the synthesis of proteins in the cell. In Oreochromis mossambicus (Mozambique tilapia), this protein is Large ribosomal subunit protein eL18 (rpl18).